Reading from the N-terminus, the 1090-residue chain is ATP-dependent helicase/deoxyribonuclease subunit B (1090 aa).

7 to 14 (GPVGSGKS) lines the ATP pocket. Residues Cys719, Cys1035, Cys1038, and Cys1044 each contribute to the [4Fe-4S] cluster site.

It belongs to the helicase family. AddB/RexB type 1 subfamily. As to quaternary structure, heterodimer of AddA and AddB. Mg(2+) serves as cofactor. The cofactor is [4Fe-4S] cluster.

In terms of biological role, the heterodimer acts as both an ATP-dependent DNA helicase and an ATP-dependent, dual-direction single-stranded exonuclease. Recognizes the chi site generating a DNA molecule suitable for the initiation of homologous recombination. The AddB subunit has 5' -&gt; 3' nuclease activity but not helicase activity. This chain is ATP-dependent helicase/deoxyribonuclease subunit B, found in Carboxydothermus hydrogenoformans (strain ATCC BAA-161 / DSM 6008 / Z-2901).